The primary structure comprises 587 residues: Thiol:disulfide interchange protein DsbD 2 (587 aa).

The signal sequence occupies residues 1-18 (MRVLILLLMLLLPGLSQA). Residues 19–172 (QPGDDLFAPR…SLQAGNLAWS (154 aa)) lie on the Periplasmic side of the membrane. 2 disulfide bridges follow: Cys124–Cys130 and Cys188–Cys308. A helical membrane pass occupies residues 173-193 (LLLFFGLGLLLAFAPCSLPML). Over 194–216 (PILAGLVVGSGAGPRRGLLLAGS) the chain is Cytoplasmic. Residues 217-237 (YVLSMALVYAGLGVVAALLGG) form a helical membrane-spanning segment. Residues 238-246 (NLQAWLQQP) are Periplasmic-facing. Residues 247 to 267 (WLLGSFAALFVFLALPMFGFF) form a helical membrane-spanning segment. At 268–299 (ELQLPAALRDRLDGLSRGRKGGSLAGAAALGA) the chain is on the cytoplasmic side. Residues 300–320 (LSGLLVGPCMTAPLAGALLYI) form a helical membrane-spanning segment. Residues 321-330 (AQTGNALHGG) lie on the Periplasmic side of the membrane. The helical transmembrane segment at 331 to 351 (LVLFSLGLGIGMPLLLLVTVG) threads the bilayer. The Cytoplasmic segment spans residues 352-360 (SRFLPKPGP). The helical transmembrane segment at 361–381 (WMNLVKGVFGFLFLGTAWILL) threads the bilayer. The Periplasmic segment spans residues 382–383 (RP). A helical membrane pass occupies residues 384 to 404 (LLGEALWIGLGGALLLVLAYA). Topologically, residues 405–416 (ALHTARGLARHA) are cytoplasmic. A helical membrane pass occupies residues 417-437 (VLFGAAGCIFGLWGAAMLLGA). Residues 438-587 (AAGADDPWRP…AHWQATRERG (150 aa)) lie on the Periplasmic side of the membrane. Residues 448-585 (LQVYAAANRG…FLAHWQATRE (138 aa)) form the Thioredoxin domain. Cys500 and Cys503 are oxidised to a cystine.

This sequence belongs to the thioredoxin family. DsbD subfamily.

Its subcellular location is the cell inner membrane. It catalyses the reaction [protein]-dithiol + NAD(+) = [protein]-disulfide + NADH + H(+). It carries out the reaction [protein]-dithiol + NADP(+) = [protein]-disulfide + NADPH + H(+). Functionally, required to facilitate the formation of correct disulfide bonds in some periplasmic proteins and for the assembly of the periplasmic c-type cytochromes. Acts by transferring electrons from cytoplasmic thioredoxin to the periplasm. This transfer involves a cascade of disulfide bond formation and reduction steps. The protein is Thiol:disulfide interchange protein DsbD 2 of Pseudomonas aeruginosa (strain ATCC 15692 / DSM 22644 / CIP 104116 / JCM 14847 / LMG 12228 / 1C / PRS 101 / PAO1).